The primary structure comprises 442 residues: MESLSSLYRDHIATLQQRTREILQRQQLEGLLIHAGEPISRFLDDHDYPFKVNPQFKAWFPVTRVPHCWLWVDGVNKPKLWYYLSIDYWYLVEPLPDSFWTPYVDIVPFADPDEIAALLPPRDNVAYLGSSPHRASLLGMERDFINPQPVLDYLHYHRAYKTDYELACMREAQKSAVNGHRAAKEAFLSGMCEFDINIAYLSACGHRDTDVPYDNIIALNEHAAVLHYTRLDQHTPEHVMSFLIDAGTEYNGYAADLTRTYAAQKDSDFAALIAAMNSEQQALIATIETGVNYIDYHLQMHGRIAKLLKQFDILSGLSEDAMVTEGLTLPFLPHGLGHPLGLQVHDVAGFMQDDRGTSLAPQSRYTHLRCTRVLQPRMVLTIEPGLYFIESLLAPWRANTFGRHFNWSRIESFKPYGGIRIEDNIVIHDNHIENMTRALKLE.

Asp-245, Asp-256, His-338, Glu-383, and Glu-422 together coordinate Mn(2+).

It belongs to the peptidase M24B family. Bacterial-type prolidase subfamily. The cofactor is Mn(2+).

It catalyses the reaction Xaa-L-Pro dipeptide + H2O = an L-alpha-amino acid + L-proline. Functionally, splits dipeptides with a prolyl residue in the C-terminal position. The sequence is that of Xaa-Pro dipeptidase from Sodalis glossinidius (strain morsitans).